Consider the following 386-residue polypeptide: Meiotic chromosome segregation protein C1539.02 (386 aa).

Disordered regions lie at residues 1–28 (MNQD…SNKS), 46–85 (RALI…SSKQ), and 366–386 (DIHE…KTKG). Residues 15 to 28 (AETSQLKNFSSNKS) show a composition bias toward polar residues.

It localises to the nucleus. Required for meiotic chromosome segregation. The sequence is that of Meiotic chromosome segregation protein C1539.02 from Schizosaccharomyces pombe (strain 972 / ATCC 24843) (Fission yeast).